A 151-amino-acid polypeptide reads, in one-letter code: uncharacterized protein (151 aa).

A disordered region spans residues 1 to 151 (MAELASIIRP…SSKTTTLKAR (151 aa)). Low complexity predominate over residues 33–45 (STGLSDLLMLLQS). Residues 53 to 64 (RARRRTVCRPRR) are compositionally biased toward basic residues. The span at 108–123 (SSSSNTSSGTATSGES) shows a compositional bias: low complexity. Residues 126 to 141 (ADWRDSSSASDDDRIP) show a composition bias toward basic and acidic residues.

This is an uncharacterized protein from Aotus trivirgatus (Three-striped night monkey).